The primary structure comprises 524 residues: 2-isopropylmalate synthase (524 aa).

Residues 12 to 274 (VIIFDTTLRD…WNRIESKMLT (263 aa)) enclose the Pyruvate carboxyltransferase domain. Residues aspartate 21, histidine 209, histidine 211, and asparagine 245 each coordinate Mn(2+). The segment at 398–524 (RLKSLTVIAG…QDAPAVAVAG (127 aa)) is regulatory domain.

Belongs to the alpha-IPM synthase/homocitrate synthase family. LeuA type 1 subfamily. As to quaternary structure, homodimer. Mn(2+) serves as cofactor.

Its subcellular location is the cytoplasm. It carries out the reaction 3-methyl-2-oxobutanoate + acetyl-CoA + H2O = (2S)-2-isopropylmalate + CoA + H(+). It functions in the pathway amino-acid biosynthesis; L-leucine biosynthesis; L-leucine from 3-methyl-2-oxobutanoate: step 1/4. Its function is as follows. Catalyzes the condensation of the acetyl group of acetyl-CoA with 3-methyl-2-oxobutanoate (2-ketoisovalerate) to form 3-carboxy-3-hydroxy-4-methylpentanoate (2-isopropylmalate). This is 2-isopropylmalate synthase from Rhodopseudomonas palustris (strain BisB5).